A 159-amino-acid polypeptide reads, in one-letter code: Probable minor fimbrial protein (159 aa).

Residues 1–6 constitute a propeptide, leader sequence; sequence MKKMHG. At Phe7 the chain carries N-methylphenylalanine. A helical membrane pass occupies residues 7–27; sequence FTLIELMIVVAIIGVLASTAL. 2 disulfide bridges follow: Cys56–Cys71 and Cys140–Cys153.

It belongs to the N-Me-Phe pilin family. The pili are polar flexible filaments of about 5.4 nanometers diameter and 2.5 micrometers average length; they consist of only a single polypeptide chain arranged in a helical configuration of five subunits per turn in the assembled pilus.

It is found in the fimbrium. The protein localises to the membrane. In Dichelobacter nodosus (Bacteroides nodosus), this protein is Probable minor fimbrial protein (fimZ).